A 328-amino-acid polypeptide reads, in one-letter code: Beta-ketoacyl-[acyl-carrier-protein] synthase III (328 aa).

Active-site residues include Cys122 and His255. Residues Gln256 to Arg260 form an ACP-binding region. Asn285 is an active-site residue.

It belongs to the thiolase-like superfamily. FabH family. Homodimer.

The protein resides in the cytoplasm. It carries out the reaction malonyl-[ACP] + acetyl-CoA + H(+) = 3-oxobutanoyl-[ACP] + CO2 + CoA. The protein operates within lipid metabolism; fatty acid biosynthesis. In terms of biological role, catalyzes the condensation reaction of fatty acid synthesis by the addition to an acyl acceptor of two carbons from malonyl-ACP. Catalyzes the first condensation reaction which initiates fatty acid synthesis and may therefore play a role in governing the total rate of fatty acid production. Possesses both acetoacetyl-ACP synthase and acetyl transacylase activities. Its substrate specificity determines the biosynthesis of branched-chain and/or straight-chain of fatty acids. This Bordetella avium (strain 197N) protein is Beta-ketoacyl-[acyl-carrier-protein] synthase III.